The following is a 246-amino-acid chain: Major pollen allergen Cyn d 1 (246 aa).

A glycan (N-linked (GlcNAc...) asparagine) is linked at Asn-9. The region spanning Gly-39–Gly-145 is the Expansin-like EG45 domain. Residues His-159–Ser-240 form the Expansin-like CBD domain.

This sequence belongs to the expansin family. Expansin B subfamily.

Its subcellular location is the secreted. The sequence is that of Major pollen allergen Cyn d 1 (CYND1) from Cynodon dactylon (Bermuda grass).